A 763-amino-acid polypeptide reads, in one-letter code: ATP-dependent RNA helicase SUPV3L1, mitochondrial (763 aa).

The N-terminal 65 residues, 1–65 (MSVNRCIYLL…RPLDTSLFIP (65 aa)), are a transit peptide targeting the mitochondrion. Residues 39–58 (RRTFDKLSTRHSSSGSSRPL) form a disordered region. The Helicase ATP-binding domain occupies 192–332 (EARAIQRKIV…AVDFITELMF (141 aa)). Position 205–212 (205–212 (GPTNSGKT)) interacts with ATP. Residues 354–519 (HAVESLDNLK…PTAEQIEMFA (166 aa)) enclose the Helicase C-terminal domain. Disordered regions lie at residues 679–721 (DSQP…KSSL) and 742–763 (EWAR…RKKK). Over residues 680 to 697 (SQPTDTESNSSSTVPESE) the composition is skewed to polar residues.

Belongs to the helicase family. The cofactor is Mg(2+). Mn(2+) serves as cofactor.

Its subcellular location is the nucleus. The protein resides in the mitochondrion matrix. It localises to the mitochondrion nucleoid. It catalyses the reaction ATP + H2O = ADP + phosphate + H(+). In terms of biological role, major helicase player in mitochondrial RNA metabolism. Component of the mitochondrial degradosome (mtEXO) complex, that degrades 3' overhang double-stranded RNA with a 3'-to-5' directionality in an ATP-dependent manner. ATPase and ATP-dependent multisubstrate helicase, able to unwind double-stranded (ds) DNA and RNA, and RNA/DNA heteroduplexes in the 5'-to-3' direction. Plays a role in the RNA surveillance system in mitochondria; regulates the stability of mature mRNAs, the removal of aberrantly formed mRNAs and the rapid degradation of non coding processing intermediates. Also implicated in recombination and chromatin maintenance pathways. May protect cells from apoptosis. Associates with mitochondrial DNA. This is ATP-dependent RNA helicase SUPV3L1, mitochondrial (supv3l1) from Danio rerio (Zebrafish).